The sequence spans 283 residues: ATP phosphoribosyltransferase (283 aa).

It belongs to the ATP phosphoribosyltransferase family. Long subfamily. In terms of assembly, equilibrium between an active dimeric form, an inactive hexameric form and higher aggregates. Interconversion between the various forms is largely reversible and is influenced by the natural substrates and inhibitors of the enzyme. Requires Mg(2+) as cofactor.

The protein resides in the cytoplasm. It carries out the reaction 1-(5-phospho-beta-D-ribosyl)-ATP + diphosphate = 5-phospho-alpha-D-ribose 1-diphosphate + ATP. It functions in the pathway amino-acid biosynthesis; L-histidine biosynthesis; L-histidine from 5-phospho-alpha-D-ribose 1-diphosphate: step 1/9. With respect to regulation, feedback inhibited by histidine. Its function is as follows. Catalyzes the condensation of ATP and 5-phosphoribose 1-diphosphate to form N'-(5'-phosphoribosyl)-ATP (PR-ATP). Has a crucial role in the pathway because the rate of histidine biosynthesis seems to be controlled primarily by regulation of HisG enzymatic activity. The polypeptide is ATP phosphoribosyltransferase (Mycobacterium sp. (strain JLS)).